A 73-amino-acid polypeptide reads, in one-letter code: Large ribosomal subunit protein bL31 (73 aa).

This sequence belongs to the bacterial ribosomal protein bL31 family. Type A subfamily. In terms of assembly, part of the 50S ribosomal subunit.

In terms of biological role, binds the 23S rRNA. The chain is Large ribosomal subunit protein bL31 from Bartonella tribocorum (strain CIP 105476 / IBS 506).